A 268-amino-acid polypeptide reads, in one-letter code: Tryptophan synthase alpha chain (268 aa).

Catalysis depends on proton acceptor residues Glu-49 and Asp-60.

It belongs to the TrpA family. In terms of assembly, tetramer of two alpha and two beta chains.

It carries out the reaction (1S,2R)-1-C-(indol-3-yl)glycerol 3-phosphate + L-serine = D-glyceraldehyde 3-phosphate + L-tryptophan + H2O. It participates in amino-acid biosynthesis; L-tryptophan biosynthesis; L-tryptophan from chorismate: step 5/5. In terms of biological role, the alpha subunit is responsible for the aldol cleavage of indoleglycerol phosphate to indole and glyceraldehyde 3-phosphate. This is Tryptophan synthase alpha chain from Sodalis glossinidius (strain morsitans).